Consider the following 299-residue polypeptide: Tetrahydromethanopterin S-methyltransferase subunit E (299 aa).

6 helical membrane-spanning segments follow: residues 57–79 (AISG…AWAL), 95–115 (GVAA…RTVG), 133–153 (IGPI…AAYL), 158–178 (LGNP…VGAI), 237–257 (GLCF…GNII), and 262–282 (VTKT…AAGI).

Belongs to the MtrE family. The complex is composed of 8 subunits; MtrA, MtrB, MtrC, MtrD, MtrE, MtrF, MtrG and MtrH.

It is found in the cell membrane. It carries out the reaction 5-methyl-5,6,7,8-tetrahydromethanopterin + coenzyme M + 2 Na(+)(in) = 5,6,7,8-tetrahydromethanopterin + methyl-coenzyme M + 2 Na(+)(out). Its pathway is one-carbon metabolism; methanogenesis from CO(2); methyl-coenzyme M from 5,10-methylene-5,6,7,8-tetrahydromethanopterin: step 2/2. Part of a complex that catalyzes the formation of methyl-coenzyme M and tetrahydromethanopterin from coenzyme M and methyl-tetrahydromethanopterin. This is an energy-conserving, sodium-ion translocating step. In Methanococcus maripaludis (strain C5 / ATCC BAA-1333), this protein is Tetrahydromethanopterin S-methyltransferase subunit E.